A 555-amino-acid polypeptide reads, in one-letter code: Potassium-transporting ATPase potassium-binding subunit (555 aa).

10 consecutive transmembrane segments (helical) span residues 2–22 (IWVA…PTGI), 60–80 (QYAL…YFVF), 130–150 (IGIT…VMAF), 173–193 (VFLP…VPQT), 246–266 (MSNI…PFTY), 278–298 (ILFV…TTSE), 374–394 (AGFV…GLMV), 412–432 (LIAV…ALAL), 483–503 (LVMF…AASL), and 525–545 (GIFI…MLVL).

The protein belongs to the KdpA family. In terms of assembly, the system is composed of three essential subunits: KdpA, KdpB and KdpC.

The protein resides in the cell membrane. In terms of biological role, part of the high-affinity ATP-driven potassium transport (or Kdp) system, which catalyzes the hydrolysis of ATP coupled with the electrogenic transport of potassium into the cytoplasm. This subunit binds the extracellular potassium ions and delivers the ions to the membrane domain of KdpB through an intramembrane tunnel. The sequence is that of Potassium-transporting ATPase potassium-binding subunit from Bacillus cereus (strain ATCC 10987 / NRS 248).